A 1053-amino-acid chain; its full sequence is MLDVNNFEYMKIGLASPDKIRSWSFGEVKKPETINYRTLKPERDGLFCERIFGPTKDWECSCGKYKRVRYKGVVCDRCGVEVTKSKVRRERMGHIELAAPVSHIWYFKGIPSRMGLVLDMSPRALEEVIYFASYVVTEAGDTALDKKQLLSEREYRAYREKYGQSFQAGMGAEAIKRLLDAVDLEGEVTELKEELKSAQGQRRTRAIRRLEVLEAFRHSGNKPSWMVLDVLPVIPPEIRPMVQLEGGRFATSDLNDLYRRVINRNNRLKRLLDLGAPSIIVQNEKRMLQEAVDGLIDNGRRGRPVTGPGNRPLKSLSHMLKGKQGRFRQNLLGKRVDYSGRSVIVCGPSLKMYQCGLPREMAIELFKPFVMRELTQRGLAHNIKSAKRKIERHSPEIWDVLEDVIREHPVLLNRAPTLHRLGIQAFEPILVEGRAIRLHPLVCTAYNADFDGDQMAVHVPLSPEAQAEARILMLAANHILNPKDGKPVVTPSQDMVLGNYYLTLERENIVGEGLVFTDINEAMIAYQNGYVHLHSRVAVAAASLGNETFTAEQNNQLLITTVGKMIFNSILPPSFPYLNEPTKTNLEVATPSQYFVPTTTDVKAHIEKQAFLLPFKKKNLEEIIAQIFKLFHITETSKMLDRMKDQGFKYSTLAGITVGISDIIVVKDKPEILAASHDEVDNVTKMFKRGLMTDEERYERVIAIWNAAKDQLQNKLIAGLDRLNPIFMMQDSGARGNISNFTQLAGMRGLMADPSGRIVELPITSNFREGLNVLEYFISSHGARKGLTDTALKTADSGYLTRRLVDVAQDVIVRETNDGSDHGLLVSDIVEGPEVIETLTERLEGRYSAKTVRHPETNEVMIRPDELFTQEIAEAIPAAGIKEVWIRSVFTCNTKHGVSKISYGKDLSTGSEVEVGEAVGIVAAQSIGEPGTQLTMRTFHTGGVAGSDITQGLPRIQEIFEARNPKGHAVITELTGEVKAIEEKANRQREITVTGTQETRTYTVPMVARLKVKVGDAVRRGDPLMDGSIDPKELLHVTDVITVENYLLGEVQK.

Positions 60, 62, 75, and 78 each coordinate Zn(2+). Mg(2+) is bound by residues aspartate 449, aspartate 451, and aspartate 453.

This sequence belongs to the RNA polymerase beta' chain family. As to quaternary structure, the RNAP catalytic core consists of 2 alpha, 1 beta, 1 beta' and 1 omega subunit. When a sigma factor is associated with the core the holoenzyme is formed, which can initiate transcription. It depends on Mg(2+) as a cofactor. Requires Zn(2+) as cofactor.

It carries out the reaction RNA(n) + a ribonucleoside 5'-triphosphate = RNA(n+1) + diphosphate. In terms of biological role, DNA-dependent RNA polymerase catalyzes the transcription of DNA into RNA using the four ribonucleoside triphosphates as substrates. In Brochothrix thermosphacta (Microbacterium thermosphactum), this protein is DNA-directed RNA polymerase subunit beta'.